The sequence spans 228 residues: Vesicle transport protein SEC20 (228 aa).

Residues 1–199 lie on the Cytoplasmic side of the membrane; that stretch reads MAAPQDVHVR…LITKYNRREL (199 aa). Residues 37-90 are a coiled coil; sequence LSALTELNTKVKEKFQQLRHRIQDLEQLAKEQDKESEKQLLLQEVENHKKQMLS. A helical; Anchor for type IV membrane protein membrane pass occupies residues 200–220; it reads TDKLLIFLALALFLATVLYIV. The Lumenal portion of the chain corresponds to 221 to 228; sequence KKRLFPFL.

This sequence belongs to the SEC20 family. In terms of assembly, component of a SNARE complex consisting of STX18, USE1L, BNIP1/SEC20L and SEC22B. Interacts directly with STX18, RINT1/TIP20L and NAPA. Interacts with ZW10 through RINT1. Interacts with BCL2. Interacts with RNF186. Interacts with RNF185. Interacts with SQSTM1; increased by 'Lys-63'-linked polyubiquitination of BNIP1. (Microbial infection) Interacts with adenovirus E1B 19K protein; plays a role in the suppression of cell apoptosis by the viral protein. Polyubiquitinated. 'Lys-63'-linked polyubiquitination by RNF185 increases the interaction with the autophagy receptor SQSTM1. Undergoes 'Lys-29'- and 'Lys-63'-linked polyubiquitination by RNF186 that may regulate BNIP1 localization to the mitochondrion. In terms of tissue distribution, isoform 1 is highly expressed in heart, brain, liver skeletal muscle and pancreas. Isoform 3 is moderately expressed in placenta, lung and kidney. Isoform 4 is highly expressed in testis and small intestine.

It is found in the endoplasmic reticulum membrane. Its subcellular location is the mitochondrion membrane. As part of a SNARE complex may be involved in endoplasmic reticulum membranes fusion and be required for the maintenance of endoplasmic reticulum organization. Also plays a role in apoptosis. It is for instance required for endoplasmic reticulum stress-induced apoptosis. As a substrate of RNF185 interacting with SQSTM1, might also be involved in mitochondrial autophagy. In Homo sapiens (Human), this protein is Vesicle transport protein SEC20 (BNIP1).